The chain runs to 506 residues: ESX-5 secretion system ATPase EccB5 (506 aa).

A helical membrane pass occupies residues 56–76 (VVASVSAALVICLGALLWSFI).

Belongs to the EccB family. As to quaternary structure, part of the ESX-5 / type VII secretion system (T7SS), which is composed of cytosolic and membrane components. The ESX-5 membrane complex is composed of EccB5, EccC5, EccD5 and EccE5.

It is found in the cell inner membrane. In terms of biological role, an ATPase. Part of the ESX-5 specialized secretion system, which is responsible for the secretion of EsxN and a number of PE_PGRS and PPE proteins, including PPE41. This is ESX-5 secretion system ATPase EccB5 from Mycobacterium tuberculosis (strain CDC 1551 / Oshkosh).